Here is a 396-residue protein sequence, read N- to C-terminus: Putative nickel insertion protein (396 aa).

The protein belongs to the LarC family.

In Methanococcoides burtonii (strain DSM 6242 / NBRC 107633 / OCM 468 / ACE-M), this protein is Putative nickel insertion protein.